A 360-amino-acid chain; its full sequence is Protein phosphatase 1 regulatory subunit 7 (360 aa).

The tract at residues methionine 1–glutamate 64 is disordered. Alanine 2 is subject to N-acetylalanine. Residues serine 12, serine 24, serine 27, serine 44, and serine 47 each carry the phosphoserine modification. Basic and acidic residues predominate over residues glutamate 17–lysine 34. The span at glutamate 53–histidine 63 shows a compositional bias: acidic residues. LRR repeat units follow at residues aspartate 77–lysine 98, lysine 99–glutamine 120, serine 121–threonine 142, glutamate 143–threonine 164, arginine 165–histidine 186, glutamine 187–threonine 208, asparagine 209–threonine 230, asparagine 231–valine 252, asparagine 253–asparagine 274, lysine 275–threonine 296, and glutamate 297–lysine 318. Serine 322 carries the phosphoserine modification. The 30-residue stretch at asparagine 331 to phenylalanine 360 folds into the LRRCT domain.

This sequence belongs to the SDS22 family. Interacts with PPP1CA, PPP1CB and PPP1CC/PPP1G isoform 1. As to expression, widely expressed.

Its subcellular location is the nucleus. Regulatory subunit of protein phosphatase 1. The sequence is that of Protein phosphatase 1 regulatory subunit 7 (PPP1R7) from Homo sapiens (Human).